The primary structure comprises 314 residues: Acetyl-coenzyme A carboxylase carboxyl transferase subunit beta (314 aa).

In terms of domain architecture, CoA carboxyltransferase N-terminal spans 37–307 (LWQKCPACDT…MSLPSIDSEA (271 aa)). Zn(2+)-binding residues include cysteine 41, cysteine 44, cysteine 60, and cysteine 63. The C4-type zinc finger occupies 41 to 63 (CPACDTLTYTKDLQQNWQVCPSC).

The protein belongs to the AccD/PCCB family. Acetyl-CoA carboxylase is a heterohexamer composed of biotin carboxyl carrier protein (AccB), biotin carboxylase (AccC) and two subunits each of ACCase subunit alpha (AccA) and ACCase subunit beta (AccD). Zn(2+) is required as a cofactor.

Its subcellular location is the cytoplasm. It carries out the reaction N(6)-carboxybiotinyl-L-lysyl-[protein] + acetyl-CoA = N(6)-biotinyl-L-lysyl-[protein] + malonyl-CoA. The protein operates within lipid metabolism; malonyl-CoA biosynthesis; malonyl-CoA from acetyl-CoA: step 1/1. In terms of biological role, component of the acetyl coenzyme A carboxylase (ACC) complex. Biotin carboxylase (BC) catalyzes the carboxylation of biotin on its carrier protein (BCCP) and then the CO(2) group is transferred by the transcarboxylase to acetyl-CoA to form malonyl-CoA. The chain is Acetyl-coenzyme A carboxylase carboxyl transferase subunit beta from Synechococcus sp. (strain JA-2-3B'a(2-13)) (Cyanobacteria bacterium Yellowstone B-Prime).